We begin with the raw amino-acid sequence, 76 residues long: UPF0154 protein Sca_0984 (76 aa).

Residues 4–24 form a helical membrane-spanning segment; that stretch reads WLAILLIVAALIIGLVGGFFL.

It belongs to the UPF0154 family.

The protein localises to the cell membrane. This Staphylococcus carnosus (strain TM300) protein is UPF0154 protein Sca_0984.